The sequence spans 311 residues: HPr kinase/phosphorylase (311 aa).

Active-site residues include His-138 and Lys-159. 153 to 160 serves as a coordination point for ATP; sequence GDSGIGKS. Position 160 (Ser-160) interacts with Mg(2+). The active-site Proton acceptor; for phosphorylation activity. Proton donor; for dephosphorylation activity is the Asp-177. The tract at residues 201–210 is important for the catalytic mechanism of both phosphorylation and dephosphorylation; the sequence is LEIRGVGIID. Glu-202 provides a ligand contact to Mg(2+). The active site involves Arg-243. The segment at 264–269 is important for the catalytic mechanism of dephosphorylation; it reads PVKTGR.

It belongs to the HPrK/P family. As to quaternary structure, homohexamer. Requires Mg(2+) as cofactor.

The catalysed reaction is [HPr protein]-L-serine + ATP = [HPr protein]-O-phospho-L-serine + ADP + H(+). The enzyme catalyses [HPr protein]-O-phospho-L-serine + phosphate + H(+) = [HPr protein]-L-serine + diphosphate. Its function is as follows. Catalyzes the ATP- as well as the pyrophosphate-dependent phosphorylation of a specific serine residue in HPr, a phosphocarrier protein of the phosphoenolpyruvate-dependent sugar phosphotransferase system (PTS). HprK/P also catalyzes the pyrophosphate-producing, inorganic phosphate-dependent dephosphorylation (phosphorolysis) of seryl-phosphorylated HPr (P-Ser-HPr). The two antagonistic activities of HprK/P are regulated by several intracellular metabolites, which change their concentration in response to the absence or presence of rapidly metabolisable carbon sources (glucose, fructose, etc.) in the growth medium. Therefore, by controlling the phosphorylation state of HPr, HPrK/P is a sensor enzyme that plays a major role in the regulation of carbon metabolism and sugar transport: it mediates carbon catabolite repression (CCR), and regulates PTS-catalyzed carbohydrate uptake and inducer exclusion. This Streptococcus sanguinis (strain SK36) protein is HPr kinase/phosphorylase.